The following is a 282-amino-acid chain: tRNA (guanine-N(1)-)-methyltransferase (282 aa).

Residues G157 and 177 to 182 each bind S-adenosyl-L-methionine; that span reads VGDYIL.

The protein belongs to the RNA methyltransferase TrmD family. Homodimer.

It is found in the cytoplasm. It carries out the reaction guanosine(37) in tRNA + S-adenosyl-L-methionine = N(1)-methylguanosine(37) in tRNA + S-adenosyl-L-homocysteine + H(+). Specifically methylates guanosine-37 in various tRNAs. The protein is tRNA (guanine-N(1)-)-methyltransferase of Rickettsia bellii (strain RML369-C).